A 452-amino-acid polypeptide reads, in one-letter code: Protein FAM81B (452 aa).

2 stretches are compositionally biased toward polar residues: residues 1–11 (MQLQFLGTLAS) and 38–55 (IMSSDTNVNKSASPTATA). The interval 1-85 (MQLQFLGTLA…KVRLSPAKMS (85 aa)) is disordered. Coiled-coil stretches lie at residues 164–192 (IQTITSIVKKLSQNIEILEDQIRARDQAA) and 329–452 (LGHI…LQEV).

Belongs to the FAM81 family.

In Homo sapiens (Human), this protein is Protein FAM81B (FAM81B).